The sequence spans 954 residues: Lysine-specific demethylase JMJ14 (954 aa).

The interval 1-46 is disordered; that stretch reads MDQLASLAESVAMEEDSEKQSIKGESSLEPDSTPSSPKITARWNPS. Over residues 29–38 the composition is skewed to polar residues; the sequence is EPDSTPSSPK. In terms of domain architecture, JmjN spans 56-97; sequence APIFYPTNEDFDDPLGYIEKLRSKAESYGICRIVPPVAWRPP. The Nuclear localization signal 1 signature appears at 136–143; it reads RKRRRISK. The tract at residues 148–170 is disordered; the sequence is RRKRDSGCDTASSGSSDSEGKFG. A JmjC domain is found at 263 to 429; it reads QYSQCGWNLN…HGQNAVEGYS (167 aa). The Fe cation site is built by His309, Glu311, and His397. The Nuclear localization signal 2 motif lies at 470–477; it reads WKRVCSED. Zn(2+) contacts are provided by Cys519, Cys522, Cys533, Cys535, Cys542, His545, Cys550, and Cys552. A C5HC2 zinc finger spans residues 519–571; the sequence is CFLCFYDLHMSASSCKCSPNRFACLIHAKDLCSCESKDRYILIRHTLDELWAL. The disordered stretch occupies residues 641–670; it reads SNKEVQLKQDGDSDVNRHGHESERNHVHGI. Over residues 645–670 the composition is skewed to basic and acidic residues; sequence VQLKQDGDSDVNRHGHESERNHVHGI. The 59-residue stretch at 726–784 folds into the FYR N-terminal domain; the sequence is ATNRLSLSVELLSSGSLVVKKLWCSKQAIYPKGFKSRVKFLSVLDPTNLTNYISEVLDA. The region spanning 786 to 876 is the FYR C-terminal domain; that stretch reads LLGPLFRVSV…HQLEEYWNQK (91 aa). Positions 884–905 are disordered; that stretch reads EPIKEGEKDDTEKGGASDPSLD. Residues 885 to 905 are compositionally biased toward basic and acidic residues; the sequence is PIKEGEKDDTEKGGASDPSLD.

This sequence belongs to the JARID1 histone demethylase family. In terms of assembly, interacts with NAC050 and NAC051/NAC052. Interacts with THAL in the nucleus. Fe(2+) is required as a cofactor. Expressed in shoot apex, primary root tip, trichomes of young leaves, leaf vascular tissues, anther filaments and styles. Detected in inflorescences, leaves, stems, roots and siliques. Mostly expressed in floral organs, and, at low levels, in other organs.

It localises to the nucleus. Its subcellular location is the nucleoplasm. The enzyme catalyses N(6),N(6),N(6)-trimethyl-L-lysyl(4)-[histone H3] + 2-oxoglutarate + O2 = N(6),N(6)-dimethyl-L-lysyl(4)-[histone H3] + formaldehyde + succinate + CO2. The catalysed reaction is N(6),N(6)-dimethyl-L-lysyl(4)-[histone H3] + 2-oxoglutarate + O2 = N(6)-methyl-L-lysyl(4)-[histone H3] + formaldehyde + succinate + CO2. It catalyses the reaction N(6)-methyl-L-lysyl(4)-[histone H3] + 2-oxoglutarate + O2 = L-lysyl(4)-[histone H3] + formaldehyde + succinate + CO2. It carries out the reaction N(6),N(6),N(6)-trimethyl-L-lysyl(4)-[histone H3] + 3 2-oxoglutarate + 3 O2 = L-lysyl(4)-[histone H3] + 3 formaldehyde + 3 succinate + 3 CO2. Functionally, transcriptional repressor. Histone demethylase that demethylates 'Lys-4' (H3K4me) of histone H3 with a higher activity for H3K4me3 and H3K4me2 than H3K4me1. No activity on H3K9me3/2, H3K36me3/2 and H3K27me3/2. Function as a nocturne 'eraser' to counteract the diurnal 'writer' methylase activity of ATXR3/SDG2 thus orchestrating the circadian rhythm of histone modifications (e.g. H3K4me3) and modulating the rhythmic expression of diurnal target genes; this mechanism also relies on the circadian clock oscillators CCA1 and LHY. Involved in a negative regulation of root meristem growth upon suboptimal root growth conditions. Represses FT and TSF expression to inhibit the floral transition. Binds around the transcription start site of the FT locus. Involved in the DRM2-mediated maintenance of DNA methylation, but not required for the de novo DNA methylation. Required for demethylating histone H3K4me3 at the target of RNA silencing. Counteracts the DNA methylation of expressed transgenes; specific attenuation of transgene DNA methylation enhances the production of aberrant RNAs (e.g. uncapped and antisense) that readily induce systemic RDR6-dependent post-transcriptional transgene silencing (PTGS) spreading. Together with NAC051/NAC052 and NAC050, regulates gene expression and flowering time, probably by the promotion of RNA-mediated gene silencing. Together with JMJ16 and JMJ17, required for plant growth and development. Promotes local and systemic immunity (especially toward the bacterial pathogen Pseudomonas syringae Pst DC3000 avrRpt2) by regulating positively pathogen-induced H3K4me3 enrichment and expression of defense genes involved in salicylic acid (SA)- and pipecolic acid (Pip)-mediated defense pathways (e.g. PR1, FMO1, ALD1 and SARD4). This chain is Lysine-specific demethylase JMJ14, found in Arabidopsis thaliana (Mouse-ear cress).